The sequence spans 316 residues: Protoheme IX farnesyltransferase (316 aa).

The disordered stretch occupies residues 1–21 (MAKSQALGNAPLTSTVAENAT). The segment covering 11–21 (PLTSTVAENAT) has biased composition (polar residues). The next 9 helical transmembrane spans lie at 42 to 62 (VVAM…PGIP), 67 to 87 (VILG…FNHV), 115 to 135 (VVFA…LNAL), 136 to 156 (TAWL…VWLK), 163 to 183 (IVIG…AVTG), 189 to 209 (ALLL…ALAI), 235 to 255 (MVLL…LTGM), 256 to 276 (SGGV…GYAL), and 295 to 315 (IWHL…TSLM).

Belongs to the UbiA prenyltransferase family. Protoheme IX farnesyltransferase subfamily.

The protein resides in the cell inner membrane. It catalyses the reaction heme b + (2E,6E)-farnesyl diphosphate + H2O = Fe(II)-heme o + diphosphate. The protein operates within porphyrin-containing compound metabolism; heme O biosynthesis; heme O from protoheme: step 1/1. In terms of biological role, converts heme B (protoheme IX) to heme O by substitution of the vinyl group on carbon 2 of heme B porphyrin ring with a hydroxyethyl farnesyl side group. This Photobacterium profundum (strain SS9) protein is Protoheme IX farnesyltransferase.